A 686-amino-acid polypeptide reads, in one-letter code: Leucine-rich repeat-containing protein 49 (686 aa).

LRR repeat units follow at residues 113–134, 135–156, 157–178, 179–200, 201–222, 223–244, and 245–266; these read HLRLLNFQHNFITRIQNISNLQ, KLISLDLYDNQIEEISGLSTLR, CLRVLLLGKNRIKKISNLENLK, SLDVLDLHGNQITKIENINHLC, ELRVLNLARNFLSHVDNLNGLD, SLTELNLRHNQITFVRDVDNLP, and CLQHLFLSFNNISSFDSVSCLA. One can recognise an LRRCT domain in the interval 279–317; it reads NPIAQESWYKHTVLQNMMQLRQLDMKRITEEERRMASVL. Positions 303-341 form a coiled coil; sequence MKRITEEERRMASVLAKKEEEKKRESHKQSLLKEKKRLT. Residues 360-388 are disordered; sequence ATNEDRKDSDSPQDPCQIDGSTLSAFPEE.

As to quaternary structure, part of the neuronal tubulin polyglutamylase complex which contains TPGS1, TPGS2, TTLL1, LRRC49 and NICN1. Interacts with PCM1; TTLL1, TPGS1, TPGS2 and LRRC49.

The protein resides in the cytoplasm. The protein localises to the cytoskeleton. It localises to the microtubule organizing center. It is found in the centrosome. Its subcellular location is the centriolar satellite. Functionally, subunit of the tubulin polyglutamylase complex (TPGC). The complex mediates cilia and flagella polyglutamylation which is essential for their biogenesis and motility. This is Leucine-rich repeat-containing protein 49 from Homo sapiens (Human).